Reading from the N-terminus, the 815-residue chain is Protein SEY1 homolog (815 aa).

The Cytoplasmic portion of the chain corresponds to 1–737 (MRQIIDYDCN…IQSTGRQPQN (737 aa)). Positions 28-260 (TLGFNVISIL…LPKDYTRRIP (233 aa)) constitute a GB1/RHD3-type G domain. 38-45 (GCQSTGKS) contacts GTP. The stretch at 298 to 321 (AKDDILDGYKKSIKDLQKKMEKRE) forms a coiled coil. A helical membrane pass occupies residues 738–758 (IPWWIYLLIIILGFDEITYVL). The Lumenal segment spans residues 759–761 (TSP). The helical transmembrane segment at 762-782 (VLVTLLLLLASFIYSYLTGNF) threads the bilayer. The Cytoplasmic portion of the chain corresponds to 783 to 815 (SSFCNYSQQFVIISTKILHYISGAIHSSLDNRK).

The protein belongs to the TRAFAC class dynamin-like GTPase superfamily. GB1/RHD3 GTPase family. RHD3 subfamily.

The protein localises to the endoplasmic reticulum membrane. Its function is as follows. Probable GTP-binding protein that may be involved in cell development. In Cryptosporidium hominis, this protein is Protein SEY1 homolog.